The sequence spans 376 residues: DNA-directed RNA polymerase subunit alpha (376 aa).

Positions 1–259 (MSDCSQNLLY…KHFSIFEKMD (259 aa)) are alpha N-terminal domain (alpha-NTD). An alpha C-terminal domain (alpha-CTD) region spans residues 276-376 (KDDILHKLVL…DKIRSKNGKG (101 aa)).

The protein belongs to the RNA polymerase alpha chain family. As to quaternary structure, homodimer. The RNAP catalytic core consists of 2 alpha, 1 beta, 1 beta' and 1 omega subunit. When a sigma factor is associated with the core the holoenzyme is formed, which can initiate transcription.

The catalysed reaction is RNA(n) + a ribonucleoside 5'-triphosphate = RNA(n+1) + diphosphate. Its function is as follows. DNA-dependent RNA polymerase catalyzes the transcription of DNA into RNA using the four ribonucleoside triphosphates as substrates. The chain is DNA-directed RNA polymerase subunit alpha from Chlamydia abortus (strain DSM 27085 / S26/3) (Chlamydophila abortus).